The chain runs to 224 residues: Biosynthetic peptidoglycan transglycosylase (224 aa).

The chain crosses the membrane as a helical span at residues 12–32; sequence ILVVLAILPVFLLLVYSLPFV.

Belongs to the glycosyltransferase 51 family.

It is found in the cell inner membrane. The enzyme catalyses [GlcNAc-(1-&gt;4)-Mur2Ac(oyl-L-Ala-gamma-D-Glu-L-Lys-D-Ala-D-Ala)](n)-di-trans,octa-cis-undecaprenyl diphosphate + beta-D-GlcNAc-(1-&gt;4)-Mur2Ac(oyl-L-Ala-gamma-D-Glu-L-Lys-D-Ala-D-Ala)-di-trans,octa-cis-undecaprenyl diphosphate = [GlcNAc-(1-&gt;4)-Mur2Ac(oyl-L-Ala-gamma-D-Glu-L-Lys-D-Ala-D-Ala)](n+1)-di-trans,octa-cis-undecaprenyl diphosphate + di-trans,octa-cis-undecaprenyl diphosphate + H(+). It functions in the pathway cell wall biogenesis; peptidoglycan biosynthesis. In terms of biological role, peptidoglycan polymerase that catalyzes glycan chain elongation from lipid-linked precursors. This Brucella suis biovar 1 (strain 1330) protein is Biosynthetic peptidoglycan transglycosylase.